We begin with the raw amino-acid sequence, 335 residues long: Holliday junction branch migration complex subunit RuvB (335 aa).

The segment at Met-1–Tyr-183 is large ATPase domain (RuvB-L). ATP-binding positions include Leu-22, Arg-23, Gly-64, Lys-67, Thr-68, Thr-69, Glu-130–Tyr-132, Arg-173, Tyr-183, and Arg-220. Thr-68 contributes to the Mg(2+) binding site. Positions Thr-184–Gln-254 are small ATPAse domain (RuvB-S). A head domain (RuvB-H) region spans residues Pro-257 to Val-335. Residues Arg-293, Arg-312, and Arg-317 each contribute to the DNA site.

This sequence belongs to the RuvB family. In terms of assembly, homohexamer. Forms an RuvA(8)-RuvB(12)-Holliday junction (HJ) complex. HJ DNA is sandwiched between 2 RuvA tetramers; dsDNA enters through RuvA and exits via RuvB. An RuvB hexamer assembles on each DNA strand where it exits the tetramer. Each RuvB hexamer is contacted by two RuvA subunits (via domain III) on 2 adjacent RuvB subunits; this complex drives branch migration. In the full resolvosome a probable DNA-RuvA(4)-RuvB(12)-RuvC(2) complex forms which resolves the HJ.

It localises to the cytoplasm. It carries out the reaction ATP + H2O = ADP + phosphate + H(+). In terms of biological role, the RuvA-RuvB-RuvC complex processes Holliday junction (HJ) DNA during genetic recombination and DNA repair, while the RuvA-RuvB complex plays an important role in the rescue of blocked DNA replication forks via replication fork reversal (RFR). RuvA specifically binds to HJ cruciform DNA, conferring on it an open structure. The RuvB hexamer acts as an ATP-dependent pump, pulling dsDNA into and through the RuvAB complex. RuvB forms 2 homohexamers on either side of HJ DNA bound by 1 or 2 RuvA tetramers; 4 subunits per hexamer contact DNA at a time. Coordinated motions by a converter formed by DNA-disengaged RuvB subunits stimulates ATP hydrolysis and nucleotide exchange. Immobilization of the converter enables RuvB to convert the ATP-contained energy into a lever motion, pulling 2 nucleotides of DNA out of the RuvA tetramer per ATP hydrolyzed, thus driving DNA branch migration. The RuvB motors rotate together with the DNA substrate, which together with the progressing nucleotide cycle form the mechanistic basis for DNA recombination by continuous HJ branch migration. Branch migration allows RuvC to scan DNA until it finds its consensus sequence, where it cleaves and resolves cruciform DNA. This chain is Holliday junction branch migration complex subunit RuvB, found in Listeria innocua serovar 6a (strain ATCC BAA-680 / CLIP 11262).